Reading from the N-terminus, the 489-residue chain is Peroxisome assembly protein 12 (489 aa).

Residues 1–17 lie on the Peroxisomal matrix side of the membrane; the sequence is MEYLPSLQQEFDELKPS. The helical transmembrane segment at 18–45 threads the bilayer; the sequence is LFELLAEQQLSDLLPPSIRYILAVATHR. At 46 to 49 the chain is on the cytoplasmic side; that stretch reads HPRY. Residues 50–74 form a helical membrane-spanning segment; sequence LLRVLNSFDEVYALLSLVVERYYLR. At 75-118 the chain is on the peroxisomal matrix side; sequence NFGGSFTENFYSLKRERVLLTKNGEIPRAQLGAPGPVRESLKLR. A helical transmembrane segment spans residues 119–156; that stretch reads NSDVWKNLLVMVGIPYLKRKLDEGYDIHAAPQASLIMN. At 157–172 the chain is on the cytoplasmic side; the sequence is GGPRYNPSDDLPPHPT. The helical transmembrane segment at 173–209 threads the bilayer; sequence IRQRFMHAYKWFLRNVYPSFNAAYYFSILAFNLAYLF. Residues 210 to 280 lie on the Peroxisomal matrix side of the membrane; it reads DNTKYSSPFL…YPQLLTSLRY (71 aa). Residues 281–308 traverse the membrane as a helical segment; that stretch reads FLPASIFALKFLEWWHASDFSRQLARKA. The Cytoplasmic portion of the chain corresponds to 309–489; the sequence is TDTLDIPAPI…GTEGLRRVLI (181 aa). Positions 316–359 are disordered; sequence APITKGMISPSERKSRPPTKQKEDPESPKSALKTSSPHKRIQPP. Residues 326 to 342 are compositionally biased toward basic and acidic residues; sequence SERKSRPPTKQKEDPES. Zn(2+) contacts are provided by C384, C387, C404, and C407. The RING-type; degenerate zinc finger occupies 384 to 444; sequence CPVCLNQLTN…DSGDGIDADG (61 aa). Residues 433-442 show a composition bias toward acidic residues; that stretch reads EDDSGDGIDA. Residues 433 to 469 form a disordered region; that stretch reads EDDSGDGIDADGDRNETESAAKTGKSRHGKWESGKGR.

This sequence belongs to the pex2/pex10/pex12 family. In terms of assembly, component of the PEX2-PEX10-PEX12 retrotranslocation channel, composed of PEX2, PEX10 and PEX12.

Its subcellular location is the peroxisome membrane. Its pathway is protein modification; protein ubiquitination. Functionally, component of a retrotranslocation channel required for peroxisome organization by mediating export of the PEX5 receptor from peroxisomes to the cytosol, thereby promoting PEX5 recycling. The retrotranslocation channel is composed of PEX2, PEX10 and PEX12; each subunit contributing transmembrane segments that coassemble into an open channel that specifically allows the passage of PEX5 through the peroxisomal membrane. PEX12 also regulates PEX5 recycling by activating the E3 ubiquitin-protein ligase activity of PEX10. When PEX5 recycling is compromised, PEX12 stimulates PEX10-mediated polyubiquitination of PEX5, leading to its subsequent degradation. This Emericella nidulans (strain FGSC A4 / ATCC 38163 / CBS 112.46 / NRRL 194 / M139) (Aspergillus nidulans) protein is Peroxisome assembly protein 12 (PEX12).